A 674-amino-acid polypeptide reads, in one-letter code: Secretin GspD (674 aa).

The signal sequence occupies residues 1-24 (MKYWLKKSSWLLAGSLLSTPLAMA). Positions 25 to 121 (NEFSASFKGT…VLSGEERANG (97 aa)) are N0. The interval 123-187 (EVITQVVAVK…EIIRRVDQAG (65 aa)) is N1. Residues 188-261 (DKEIEVVELN…LIKQLDVEMA (74 aa)) are N2. Residues 264–338 (GNNRVVYLKY…AMLEVIGQLD (75 aa)) form an N3 region. The secretin stretch occupies residues 343–612 (QVLIEALIVE…VFIKPTIIRD (270 aa)). A cap gate region spans residues 395–417 (DTTQTKAVYDTNNNFLRNETTTT). Residues 614-674 (VTADGITQRK…AFIEQMEAKQ (61 aa)) form a s domain region.

It belongs to the bacterial secretin family. GSP D subfamily. In terms of assembly, forms a cylindrical channel with 15 subunits; unlike E.coli no 16-subunit channels are seen. The closed pentadeacameric channels are 195 Angstroms long and 145 Angstroms in diameter. Each subunit turns in a clock-wise manner around the channel.

Its subcellular location is the cell outer membrane. Functionally, involved in a type II secretion system (T2SS, formerly general secretion pathway, GSP) for the export of proteins. Required for secretion of cholera toxin through the outer membrane. This subunit forms the outer membrane channel. The chain is Secretin GspD (epsD) from Vibrio cholerae serotype O1 (strain ATCC 39315 / El Tor Inaba N16961).